The chain runs to 166 residues: UPF0179 protein Tneu_1978 (166 aa).

The interval P140–K166 is disordered. The span at R157–K166 shows a compositional bias: pro residues.

Belongs to the UPF0179 family.

This Pyrobaculum neutrophilum (strain DSM 2338 / JCM 9278 / NBRC 100436 / V24Sta) (Thermoproteus neutrophilus) protein is UPF0179 protein Tneu_1978.